The sequence spans 458 residues: Exodeoxyribonuclease 7 large subunit (458 aa).

The protein belongs to the XseA family. In terms of assembly, heterooligomer composed of large and small subunits.

It is found in the cytoplasm. It carries out the reaction Exonucleolytic cleavage in either 5'- to 3'- or 3'- to 5'-direction to yield nucleoside 5'-phosphates.. In terms of biological role, bidirectionally degrades single-stranded DNA into large acid-insoluble oligonucleotides, which are then degraded further into small acid-soluble oligonucleotides. This Escherichia coli (strain UTI89 / UPEC) protein is Exodeoxyribonuclease 7 large subunit.